A 290-amino-acid chain; its full sequence is Zinc-finger homeodomain protein 2 (290 aa).

Acidic residues predominate over residues 1–15 (MDFDDHDEGDGDEEM). The segment at 1–59 (MDFDDHDEGDGDEEMPPMPLSSGYDAPMQPGLGGGGGGVPKPGGGVGGGGGGGGGGGGG) is disordered. Residues 31–59 (GLGGGGGGVPKPGGGVGGGGGGGGGGGGG) show a composition bias toward gly residues. The segment at 63–112 (YRECLKNHAVGIGGHAVDGCGEFMASGEEGSIDALRCAACGCHRNFHRKE) adopts a ZF-HD dimerization-type; degenerate zinc-finger fold. Residues 226-289 (KKRFRTKFTQ…NNKHTLGKKA (64 aa)) constitute a DNA-binding region (homeobox).

As to quaternary structure, homo- and heterodimer with other ZFHD proteins.

The protein resides in the nucleus. Putative transcription factor. The sequence is that of Zinc-finger homeodomain protein 2 (ZHD2) from Oryza sativa subsp. japonica (Rice).